The chain runs to 174 residues: CDP-archaeol synthase (174 aa).

4 consecutive transmembrane segments (helical) span residues 51-71 (LIGL…AGFI), 74-94 (SLLV…ALLG), 112-132 (MLPI…TFLL), and 136-156 (WLLA…IPVF).

The protein belongs to the CDP-archaeol synthase family. Mg(2+) serves as cofactor.

The protein resides in the cell membrane. The catalysed reaction is 2,3-bis-O-(geranylgeranyl)-sn-glycerol 1-phosphate + CTP + H(+) = CDP-2,3-bis-O-(geranylgeranyl)-sn-glycerol + diphosphate. The protein operates within membrane lipid metabolism; glycerophospholipid metabolism. Its function is as follows. Catalyzes the formation of CDP-2,3-bis-(O-geranylgeranyl)-sn-glycerol (CDP-archaeol) from 2,3-bis-(O-geranylgeranyl)-sn-glycerol 1-phosphate (DGGGP) and CTP. This reaction is the third ether-bond-formation step in the biosynthesis of archaeal membrane lipids. In Methanocella arvoryzae (strain DSM 22066 / NBRC 105507 / MRE50), this protein is CDP-archaeol synthase.